Here is a 93-residue protein sequence, read N- to C-terminus: Photosystem I iron-sulfur center (93 aa).

4Fe-4S ferredoxin-type domains follow at residues 13 to 43 (KDHEIRIYSTCIGCTQCVRACPTDVLEMVPS) and 50 to 80 (QVVTVPRIEDCVGCKRCESACPTDFLSIRVY). [4Fe-4S] cluster is bound by residues Cys-23, Cys-26, Cys-29, Cys-33, Cys-60, Cys-63, Cys-66, and Cys-70.

As to quaternary structure, the eukaryotic PSI reaction center is composed of at least 11 subunits. [4Fe-4S] cluster serves as cofactor.

It localises to the plastid. The protein resides in the chloroplast thylakoid membrane. The enzyme catalyses reduced [plastocyanin] + hnu + oxidized [2Fe-2S]-[ferredoxin] = oxidized [plastocyanin] + reduced [2Fe-2S]-[ferredoxin]. Its function is as follows. Apoprotein for the two 4Fe-4S centers FA and FB of photosystem I (PSI); essential for photochemical activity. FB is the terminal electron acceptor of PSI, donating electrons to ferredoxin. The C-terminus interacts with PsaA/B/D and helps assemble the protein into the PSI complex. Required for binding of PsaD and PsaE to PSI. PSI is a plastocyanin-ferredoxin oxidoreductase, converting photonic excitation into a charge separation, which transfers an electron from the donor P700 chlorophyll pair to the spectroscopically characterized acceptors A0, A1, FX, FA and FB in turn. The sequence is that of Photosystem I iron-sulfur center from Bigelowiella natans (Pedinomonas minutissima).